We begin with the raw amino-acid sequence, 255 residues long: Electron transfer flavoprotein subunit beta (255 aa).

Alanine 2 is modified (N-acetylalanine). AMP-binding positions include alanine 9, 39–42 (NPFC), cysteine 66, and 123–134 (GKQAIDDDCNQT). The interval 183-205 (ADLRLNEPRYATLPNIMKAKKKK) is recognition loop. Lysine 200 is subject to N6,N6,N6-trimethyllysine; by ETFBKMT; alternate. Lysine 200 is modified (N6-acetyllysine; alternate). The residue at position 200 (lysine 200) is an N6-methyllysine; alternate. Lysine 203 carries the N6,N6,N6-trimethyllysine; by ETFBKMT modification. Lysine 210 carries the post-translational modification N6-acetyllysine; alternate. N6-succinyllysine; alternate is present on lysine 210. Phosphoserine is present on residues serine 223 and serine 226. Position 238 is an N6-acetyllysine (lysine 238). Lysine 248 carries the N6-acetyllysine; alternate modification. An N6-succinyllysine; alternate modification is found at lysine 248.

The protein belongs to the ETF beta-subunit/FixA family. In terms of assembly, heterodimer composed of ETFA and ETFB. Identified in a complex that contains ETFA, ETFB and ETFRF1. Interacts with ACADM. In terms of processing, methylated. Trimethylation at Lys-200 and Lys-203 may negatively regulate the activity in electron transfer from acyl-CoA dehydrogenases.

It localises to the mitochondrion matrix. Functionally, heterodimeric electron transfer flavoprotein that accepts electrons from several mitochondrial dehydrogenases, including acyl-CoA dehydrogenases, glutaryl-CoA and sarcosine dehydrogenase. It transfers the electrons to the main mitochondrial respiratory chain via ETF-ubiquinone oxidoreductase. Required for normal mitochondrial fatty acid oxidation and normal amino acid metabolism. ETFB binds an AMP molecule that probably has a purely structural role. The protein is Electron transfer flavoprotein subunit beta of Sus scrofa (Pig).